Consider the following 446-residue polypeptide: Glucose-6-phosphate isomerase (446 aa).

Glu288 serves as the catalytic Proton donor. Catalysis depends on residues His309 and Lys423.

It belongs to the GPI family.

It localises to the cytoplasm. It catalyses the reaction alpha-D-glucose 6-phosphate = beta-D-fructose 6-phosphate. The protein operates within carbohydrate biosynthesis; gluconeogenesis. It participates in carbohydrate degradation; glycolysis; D-glyceraldehyde 3-phosphate and glycerone phosphate from D-glucose: step 2/4. In terms of biological role, catalyzes the reversible isomerization of glucose-6-phosphate to fructose-6-phosphate. This Lactobacillus delbrueckii subsp. bulgaricus (strain ATCC 11842 / DSM 20081 / BCRC 10696 / JCM 1002 / NBRC 13953 / NCIMB 11778 / NCTC 12712 / WDCM 00102 / Lb 14) protein is Glucose-6-phosphate isomerase.